We begin with the raw amino-acid sequence, 395 residues long: Proteinase-activated receptor 2 (395 aa).

An N-terminal signal peptide occupies residues 1–25 (MRSPSAAWLLGGVLLLAASGSCNRT). Residues Asn-23 and Asn-29 are each glycosylated (N-linked (GlcNAc...) asparagine). Residues 26 to 34 (VPGNKSKGR) constitute a propeptide, removed for receptor activation. The Extracellular segment spans residues 35 to 69 (SLIGNVDNSPVVAGRGVTVKPGFSVDEFSTSVLTG). The chain crosses the membrane as a helical span at residues 70–99 (KLTTVFLPVVYTIVFVVGLPSNGMALWVFL). Residues 100-106 (FRTKKKH) lie on the Cytoplasmic side of the membrane. A helical membrane pass occupies residues 107-135 (PAVIYMANLALADLLSVTWFPLKIAYHIH). Residues 136-147 (GNNWIYGESLCK) are Extracellular-facing. Cys-146 and Cys-224 form a disulfide bridge. The helical transmembrane segment at 148–175 (VLIGFFYGNMYCSILFMTCLSVQRYWVI) threads the bilayer. The Cytoplasmic portion of the chain corresponds to 176–181 (VNPMVH). A helical membrane pass occupies residues 182–209 (PKKQANIAIGVSLGIWLLILLLTIPLYV). Topologically, residues 210-233 (VKQTSYIRALNITTCHDVLPEEVL) are extracellular. N-linked (GlcNAc...) asparagine glycosylation is present at Asn-220. Residues 234-267 (VGDMFNYFLSLAIGVFLFPAFLTASAYVLMIRTL) traverse the membrane as a helical segment. The Cytoplasmic portion of the chain corresponds to 268–275 (QSSAMDES). A helical transmembrane segment spans residues 276–315 (SGKKRRRAIKLIVTVLAMYLICFTPSNLLLVVHYFLIKTR). At 316–321 (GQSHVY) the chain is on the extracellular side. Residues 322–345 (ALYIVALCLSTLNSCIDPFVYYFI) form a helical membrane-spanning segment. Over 346-395 (SQDFRDHAKNALLCRSVRTVKRMQVSLSSKKFSGKSSSYSSSSTSVKGSY) the chain is Cytoplasmic. Cys-359 carries the S-palmitoyl cysteine lipid modification.

This sequence belongs to the G-protein coupled receptor 1 family. As to quaternary structure, interacts with TLR4, COPS5 and TMED2. Interacts with GNAQ, GNA11, GNA12, GNA13 and GNA14. Post-translationally, a proteolytic cleavage generates a new N-terminus that functions as a tethered ligand. Activating serine proteases include trypsin, mast cell tryptase, coagulation factors VII and Xa, myeloblastin/PRTN3 and membrane-type serine protease 1/ST14. Proposed subsequent cleavage by serine proteases is leading to receptor deactivation and include neutrophil elastase and cathepsin G. At least in part, implicated proteases are also shown to activate the receptor; the glycosylation status of the receptor is thought to contribute to the difference. N-glycosylated and sialylated. In terms of processing, multiple phosphorylated on serine and threonine residues in the cytoplasmic region upon receptor activation; required for receptor desensitization and recruitment of beta-arrestin. Post-translationally, monoubiquitinated by CBL at the plasma membrane and in early endosomes; not required for receptor endocytosis but for translocation to late endosomes or lysosomes. Deubiquitination involves STAMBP and USP8; required for lysosomal trafficking and receptor degradation.

Its subcellular location is the cell membrane. Its function is as follows. Receptor for trypsin and trypsin-like enzymes coupled to G proteins. Its function is mediated through the activation of several signaling pathways including phospholipase C (PLC), intracellular calcium, mitogen-activated protein kinase (MAPK), I-kappaB kinase/NF-kappaB and Rho. Can also be transactivated by cleaved F2R/PAR1. Involved in modulation of inflammatory responses and regulation of innate and adaptive immunity, and acts as a sensor for proteolytic enzymes generated during infection. Generally is promoting inflammation. Can signal synergistically with TLR4 and probably TLR2 in inflammatory responses and modulates TLR3 signaling. Has a protective role in establishing the endothelial barrier; the activity involves coagulation factor X. Regulates endothelial cell barrier integrity during neutrophil extravasation, probably following proteolytic cleavage by PRTN3. Proposed to have a bronchoprotective role in airway epithelium, but also shown to compromise the airway epithelial barrier by interrupting E-cadherin adhesion. Involved in the regulation of vascular tone; activation results in hypotension presumably mediated by vasodilation. Associates with a subset of G proteins alpha subunits such as GNAQ, GNA11, GNA14, GNA12 and GNA13, but probably not with G(o) alpha, G(i) subunit alpha-1 and G(i) subunit alpha-2. Believed to be a class B receptor which internalizes as a complex with arrestin and traffic with it to endosomal vesicles, presumably as desensitized receptor, for extended periods of time. Mediates inhibition of TNF-alpha stimulated JNK phosphorylation via coupling to GNAQ and GNA11; the function involves dissociation of RIPK1 and TRADD from TNFR1. Mediates phosphorylation of nuclear factor NF-kappa-B RELA subunit at 'Ser-536'; the function involves IKBKB and is predominantly independent of G proteins. Involved in cellular migration. Involved in cytoskeletal rearrangement and chemotaxis through beta-arrestin-promoted scaffolds; the function is independent of GNAQ and GNA11 and involves promotion of cofilin dephosphorylation and actin filament severing. Induces redistribution of COPS5 from the plasma membrane to the cytosol and activation of the JNK cascade is mediated by COPS5. Involved in the recruitment of leukocytes to the sites of inflammation and is the major PAR receptor capable of modulating eosinophil function such as pro-inflammatory cytokine secretion, superoxide production and degranulation. During inflammation promotes dendritic cell maturation, trafficking to the lymph nodes and subsequent T-cell activation. Involved in antimicrobial response of innate immune cells; activation enhances phagocytosis of Gram-positive and killing of Gram-negative bacteria. Acts synergistically with interferon-gamma in enhancing antiviral responses. Probably mediates activation of pro-inflammatory and pro-fibrotic responses in fibroblasts, triggered by coagulation factor Xa (F10). Probably mediates activation of barrier protective signaling responses in endothelial cells, triggered by coagulation factor Xa (F10). The protein is Proteinase-activated receptor 2 (F2RL1) of Bos taurus (Bovine).